Reading from the N-terminus, the 364-residue chain is RNA-binding protein ZC3H11 (364 aa).

The segment at 64-92 (RYKTKLCKNFVQYGTCPYDIRCMFAHGEE) adopts a C3H1-type zinc-finger fold. Positions 194–199 (VRHNPY) match the MKT1-binding motif motif. The tract at residues 340–364 (EQSQSHLKREGNEGRGEGLHMFLSL) is disordered. Residues 346 to 357 (LKREGNEGRGEG) show a composition bias toward basic and acidic residues.

As to quaternary structure, interacts (via MKT1-binding motif) with MKT1. Interacts with PBP1 (via C-terminus); the interaction is direct. In terms of processing, phosphorylated at the N-terminus. CK1.2-dependent phosphorylation may lead to proteasome-dependent degradation of ZC3H11 in absence of stress.

It localises to the cytoplasm. Its function is as follows. RNA-binding protein involved in regulation of mRNA stability. Binds AU-rich regions in the 3'-UTR of mRNAs and promotes their stabilization by recruiting a MKT1-containing complex. Stabilizes chaperone mRNAs during stress that causes an accumulation of misfolded or unfolded proteins in the cytoplasm. The polypeptide is RNA-binding protein ZC3H11 (Trypanosoma brucei brucei (strain 927/4 GUTat10.1)).